Consider the following 583-residue polypeptide: Transmembrane protein 108 (583 aa).

A helical membrane pass occupies residues 7-27 (ALYCQLLSFLLTLALTEALVF). An interacts with SH3GL2 region spans residues 31–176 (EPSPRESLQV…ATIRRPPRPP (146 aa)). 2 disordered regions span residues 71–360 (VTPT…GVFA) and 376–404 (VPSEGLPQGTSLAPQAPAHPTWASESTVS). 2 stretches are compositionally biased toward polar residues: residues 80–93 (PSSQATAPMATTTP) and 100–122 (PTNTISTIMATASTPHSEGSLST). Over residues 177–187 (GSSRKGAGSSP) the composition is skewed to low complexity. Residues 180-413 (RKGAGSSPRP…SQAEEKAVAT (234 aa)) form an interacts with DST (isoform 1) region. Polar residues-rich tracts occupy residues 251–273 (YSSSPQPQTVAATSAPSRTSWVP), 310–319 (ASGTPASQQR), and 333–357 (DGSSHSDSWLTVTPGTSRPPSTNSG). The chain crosses the membrane as a helical span at residues 477–497 (IAWVILAISVPISSCSVLLTV). Positions 498–583 (CCLRRKKKPA…FVGNDQVSEI (86 aa)) are interaction with CYFIP2.

Interacts with DST (isoform 1). Interacts with SH3GL2. Interacts (via N-terminus) with CYFIP1 and CYFIP2; the interactions associate TMEM108 with the WAVE1 complex. In terms of processing, glycosylated.

The protein resides in the membrane. It localises to the postsynaptic density. It is found in the endosome membrane. The protein localises to the cell projection. Its subcellular location is the axon. The protein resides in the dendrite. It localises to the early endosome. In terms of biological role, transmembrane protein required for proper cognitive functions. Involved in the development of dentate gyrus (DG) neuron circuitry, is necessary for AMPA receptors surface expression and proper excitatory postsynaptic currents of DG granule neurons. Regulates the organization and stability of the microtubule network of sensory neurons to allow axonal transport. Through the interaction with DST, mediates the docking of the dynein/dynactin motor complex to vesicle cargos for retrograde axonal transport. In hippocampal neurons, required for BDNF-dependent dendrite outgrowth. Cooperates with SH3GL2 and recruits the WAVE1 complex to facilitate actin-dependent BDNF:NTRK2 early endocytic trafficking and mediate signaling from early endosomes. The sequence is that of Transmembrane protein 108 from Bos taurus (Bovine).